Reading from the N-terminus, the 464-residue chain is tRNA-2-methylthio-N(6)-dimethylallyladenosine synthase (464 aa).

The MTTase N-terminal domain occupies 5-122 (RKLYVKSFGC…LPEMLARVRD (118 aa)). [4Fe-4S] cluster-binding residues include cysteine 14, cysteine 50, cysteine 85, cysteine 163, cysteine 167, and cysteine 170. The Radical SAM core domain occupies 149 to 383 (KKRGPTAFVT…VLEASKTAFD (235 aa)). In terms of domain architecture, TRAM spans 384–446 (RACMGRRFDI…PNSLAGQVVD (63 aa)).

The protein belongs to the methylthiotransferase family. MiaB subfamily. In terms of assembly, monomer. [4Fe-4S] cluster serves as cofactor.

Its subcellular location is the cytoplasm. It catalyses the reaction N(6)-dimethylallyladenosine(37) in tRNA + (sulfur carrier)-SH + AH2 + 2 S-adenosyl-L-methionine = 2-methylsulfanyl-N(6)-dimethylallyladenosine(37) in tRNA + (sulfur carrier)-H + 5'-deoxyadenosine + L-methionine + A + S-adenosyl-L-homocysteine + 2 H(+). Its function is as follows. Catalyzes the methylthiolation of N6-(dimethylallyl)adenosine (i(6)A), leading to the formation of 2-methylthio-N6-(dimethylallyl)adenosine (ms(2)i(6)A) at position 37 in tRNAs that read codons beginning with uridine. This chain is tRNA-2-methylthio-N(6)-dimethylallyladenosine synthase, found in Azorhizobium caulinodans (strain ATCC 43989 / DSM 5975 / JCM 20966 / LMG 6465 / NBRC 14845 / NCIMB 13405 / ORS 571).